We begin with the raw amino-acid sequence, 427 residues long: MTSRNQQLFERAQRHIPGGVNSPVRAFRSVGGTPCFFQKGVGAKVQDADGKWYTDYVGSWGPMILGHAHPDVIAAVQAAVVDGLSFGAPTEKEVDIADLLCELVPSMDMVRLVSSGTEATMSAIRLARGHTGRDVLIKFEGCYHGHSDGLLVKAGSGLLTFGNPSSSGVPAGTAETTMVLTYNDPQELADAFAKHGDKIAAVIVEPVVGNMNLIAPTQAFLNAMRDLCTKNGSVLIFDEVMTGFRVGLKSAQGLFGITPDLSTFGKVVGGGMPLGAFGGKREIMEKIAPLGPVYQAGTLSGNPIATAAGLATLKLIQAPGFYEALTAKTKALCDGLVAAAKKHGVAFSAQNIGGMFGLYFAEQCPGTYDEVLACDKEAFNRFFHAMLDAGHYFAPSAFEAGFVSAAHSDADIAGTIAAADAYFASLK.

Lys-266 is modified (N6-(pyridoxal phosphate)lysine).

This sequence belongs to the class-III pyridoxal-phosphate-dependent aminotransferase family. HemL subfamily. In terms of assembly, homodimer. Pyridoxal 5'-phosphate is required as a cofactor.

The protein localises to the cytoplasm. It catalyses the reaction (S)-4-amino-5-oxopentanoate = 5-aminolevulinate. It functions in the pathway porphyrin-containing compound metabolism; protoporphyrin-IX biosynthesis; 5-aminolevulinate from L-glutamyl-tRNA(Glu): step 2/2. This Dechloromonas aromatica (strain RCB) protein is Glutamate-1-semialdehyde 2,1-aminomutase.